Here is a 436-residue protein sequence, read N- to C-terminus: Homeobox protein PKNOX1 (436 aa).

Positions 23–50 are disordered; the sequence is ELKTEQDPNCSDPDAEGVSPPPIESQTP. Phosphoserine occurs at positions 33 and 41. Residues 80–163 form the MEIS N-terminal domain; sequence GSEGTTSASF…MNSETLLSGE (84 aa). The homeobox; TALE-type DNA-binding region spans 259-321; that stretch reads SKNKRGVLPK…NARRRILQPM (63 aa). Residues 401–436 form a disordered region; that stretch reads AGQSEDESVDSTEDEGGALAPTHISGLVLENSDSLQ. The span at 404-416 shows a compositional bias: acidic residues; that stretch reads SEDESVDSTEDEG.

It belongs to the TALE/MEIS homeobox family. In terms of assembly, interacts with MN1.

The protein localises to the nucleus. Its function is as follows. Activates transcription in the presence of PBX1A and HOXA1. (Microbial infection) In complex with PBX1, binds to the 5'-TGATTGAC-3' consensus sequence in the U5 region of Moloney murine leukemia virus and promotes viral transcription. This Mus musculus (Mouse) protein is Homeobox protein PKNOX1.